Here is a 401-residue protein sequence, read N- to C-terminus: Argininosuccinate synthase (401 aa).

Position 9-17 (Ala-9–Ser-17) interacts with ATP. Tyr-86 serves as a coordination point for L-citrulline. An ATP-binding site is contributed by Gly-116. Residues Thr-118, Asn-122, and Asp-123 each contribute to the L-aspartate site. Position 122 (Asn-122) interacts with L-citrulline. Arg-126, Ser-174, Ser-183, Glu-259, and Tyr-271 together coordinate L-citrulline.

Belongs to the argininosuccinate synthase family. Type 1 subfamily. In terms of assembly, homotetramer.

It is found in the cytoplasm. The enzyme catalyses L-citrulline + L-aspartate + ATP = 2-(N(omega)-L-arginino)succinate + AMP + diphosphate + H(+). The protein operates within amino-acid biosynthesis; L-arginine biosynthesis; L-arginine from L-ornithine and carbamoyl phosphate: step 2/3. This is Argininosuccinate synthase from Bacillus anthracis (strain A0248).